Consider the following 76-residue polypeptide: Protein sigN132 (76 aa).

Over residues 1-13 (MLFESISTLSNLK) the composition is skewed to polar residues. The segment at 1 to 33 (MLFESISTLSNLKSASKSSMIASTGSTSSKSSN) is disordered. Low complexity predominate over residues 14–33 (SASKSSMIASTGSTSSKSSN).

This chain is Protein sigN132, found in Dictyostelium discoideum (Social amoeba).